A 230-amino-acid polypeptide reads, in one-letter code: 7-cyano-7-deazaguanine synthase (230 aa).

An ATP-binding site is contributed by L9–A19. Positions 190, 198, 201, and 204 each coordinate Zn(2+).

The protein belongs to the QueC family. Zn(2+) is required as a cofactor.

It catalyses the reaction 7-carboxy-7-deazaguanine + NH4(+) + ATP = 7-cyano-7-deazaguanine + ADP + phosphate + H2O + H(+). Its pathway is purine metabolism; 7-cyano-7-deazaguanine biosynthesis. Functionally, catalyzes the ATP-dependent conversion of 7-carboxy-7-deazaguanine (CDG) to 7-cyano-7-deazaguanine (preQ(0)). The polypeptide is 7-cyano-7-deazaguanine synthase (Microcystis aeruginosa (strain NIES-843 / IAM M-2473)).